Here is a 236-residue protein sequence, read N- to C-terminus: 2-C-methyl-D-erythritol 4-phosphate cytidylyltransferase (236 aa).

The protein belongs to the IspD/TarI cytidylyltransferase family. IspD subfamily. Homodimer.

The enzyme catalyses 2-C-methyl-D-erythritol 4-phosphate + CTP + H(+) = 4-CDP-2-C-methyl-D-erythritol + diphosphate. The protein operates within isoprenoid biosynthesis; isopentenyl diphosphate biosynthesis via DXP pathway; isopentenyl diphosphate from 1-deoxy-D-xylulose 5-phosphate: step 2/6. Catalyzes the formation of 4-diphosphocytidyl-2-C-methyl-D-erythritol from CTP and 2-C-methyl-D-erythritol 4-phosphate (MEP). The sequence is that of 2-C-methyl-D-erythritol 4-phosphate cytidylyltransferase from Salmonella newport (strain SL254).